The following is a 359-amino-acid chain: 4-hydroxy-3-methylbut-2-en-1-yl diphosphate synthase (flavodoxin) (359 aa).

[4Fe-4S] cluster is bound by residues Cys263, Cys266, Cys298, and Glu305.

This sequence belongs to the IspG family. [4Fe-4S] cluster is required as a cofactor.

The catalysed reaction is (2E)-4-hydroxy-3-methylbut-2-enyl diphosphate + oxidized [flavodoxin] + H2O + 2 H(+) = 2-C-methyl-D-erythritol 2,4-cyclic diphosphate + reduced [flavodoxin]. It functions in the pathway isoprenoid biosynthesis; isopentenyl diphosphate biosynthesis via DXP pathway; isopentenyl diphosphate from 1-deoxy-D-xylulose 5-phosphate: step 5/6. In terms of biological role, converts 2C-methyl-D-erythritol 2,4-cyclodiphosphate (ME-2,4cPP) into 1-hydroxy-2-methyl-2-(E)-butenyl 4-diphosphate. This chain is 4-hydroxy-3-methylbut-2-en-1-yl diphosphate synthase (flavodoxin), found in Wolinella succinogenes (strain ATCC 29543 / DSM 1740 / CCUG 13145 / JCM 31913 / LMG 7466 / NCTC 11488 / FDC 602W) (Vibrio succinogenes).